Here is a 386-residue protein sequence, read N- to C-terminus: Lipoyl synthase, mitochondrial (386 aa).

The N-terminal 21 residues, 1–21, are a transit peptide targeting the mitochondrion; that stretch reads MISRNSILLRRLYPTTIIRTL. Cys107, Cys112, Cys118, Cys137, Cys141, Cys144, and Ser352 together coordinate [4Fe-4S] cluster. The Radical SAM core domain maps to 122–341; the sequence is KKSEATATIM…RDTALDMGFL (220 aa).

Belongs to the radical SAM superfamily. Lipoyl synthase family. [4Fe-4S] cluster is required as a cofactor.

It localises to the mitochondrion. It carries out the reaction [[Fe-S] cluster scaffold protein carrying a second [4Fe-4S](2+) cluster] + N(6)-octanoyl-L-lysyl-[protein] + 2 oxidized [2Fe-2S]-[ferredoxin] + 2 S-adenosyl-L-methionine + 4 H(+) = [[Fe-S] cluster scaffold protein] + N(6)-[(R)-dihydrolipoyl]-L-lysyl-[protein] + 4 Fe(3+) + 2 hydrogen sulfide + 2 5'-deoxyadenosine + 2 L-methionine + 2 reduced [2Fe-2S]-[ferredoxin]. It participates in protein modification; protein lipoylation via endogenous pathway; protein N(6)-(lipoyl)lysine from octanoyl-[acyl-carrier-protein]: step 2/2. Catalyzes the radical-mediated insertion of two sulfur atoms into the C-6 and C-8 positions of the octanoyl moiety bound to the lipoyl domains of lipoate-dependent enzymes, thereby converting the octanoylated domains into lipoylated derivatives. The sequence is that of Lipoyl synthase, mitochondrial (LAB5) from Candida albicans (strain SC5314 / ATCC MYA-2876) (Yeast).